The chain runs to 257 residues: MNPWINANVLKVHKWTQNLFSLILNAEIAPFQAGQFTKLALNEENINFSNNVKKKKIQRAYSFVNAPSNKNLEIYIVRILNGKLSNLLYNLKSGDNLFIKEKSFGFFTLDEIPNCKTLWMFATGTGIGPYCSILQEYKNINRFKNIILIHAVRYQNELTYLPLMKQLYKSYNGKLKIETIVSREKNHNSLYGRIPLLLQNQILEKKIGLKINRNDSHVMLCGNPAMVKDTYLFLQKDRCMQKNLRRKHGHITMENYW.

The 109-residue stretch at 2–110 (NPWINANVLK…EKSFGFFTLD (109 aa)) folds into the FAD-binding FR-type domain. FAD is bound by residues 59–62 (RAYS), Y75, 83–85 (KLS), and T125. NADP(+) is bound by residues 152-153 (VR), 182-183 (SR), R193, 223-225 (NPA), and D229. 256 to 257 (YW) is a binding site for FAD.

The protein belongs to the ferredoxin--NADP reductase type 1 family. It depends on FAD as a cofactor.

It localises to the cytoplasm. It carries out the reaction 2 reduced [2Fe-2S]-[ferredoxin] + NADP(+) + H(+) = 2 oxidized [2Fe-2S]-[ferredoxin] + NADPH. The catalysed reaction is reduced [flavodoxin] + NADP(+) = oxidized [flavodoxin] + NADPH + 2 H(+). In terms of biological role, transports electrons between flavodoxin or ferredoxin and NADPH. In Buchnera aphidicola subsp. Schizaphis graminum (strain Sg), this protein is Flavodoxin/ferredoxin--NADP reductase (fpr).